We begin with the raw amino-acid sequence, 355 residues long: MVKYVVTGGCGFLGSHIVKCILKYAPEVTEVVAYDINISHIMTMWSSKLKVVRGDVMDVMALAKAVDGADVVIHTAGIVDVWYRHTDDEIYRVNVSGTKNVLMCCINAGVQVLVNTSSMEVVGPNTTSGVFVRGGERTPYNTVHDHVYPLSKDRAEKLVKHYTGVAAAPGMPALKTCSLRPTGIYGEGCDLLEKFFHDTVNAGNVAYGGSPPDSEHGRVYVGNVAWMHLLAARALLAGGESAHKVNGEAFFCYDDSPYMSYDAFNAELFEDRGFGYVYVPYWVMKPMAAYNDLKRKFLGCFGVKRSPILNSYTLALARTSFTVKTSKARRMFGYMPLYEWSEAKRRTKDWISTLK.

It belongs to the 3-beta-HSD family.

This is an uncharacterized protein from Frog virus 3 (isolate Goorha) (FV-3).